Here is a 49-residue protein sequence, read N- to C-terminus: Large ribosomal subunit protein bL34 (49 aa).

The protein belongs to the bacterial ribosomal protein bL34 family.

This Sorangium cellulosum (strain So ce56) (Polyangium cellulosum (strain So ce56)) protein is Large ribosomal subunit protein bL34.